We begin with the raw amino-acid sequence, 463 residues long: Hydrolase pyiE (463 aa).

Catalysis depends on Ser252, which acts as the Nucleophile. The disordered stretch occupies residues 350 to 373 (KSDGSRANGKKSHSPTDGGGVESD).

Belongs to the AB hydrolase superfamily. FUS2 hydrolase family. As to quaternary structure, homodimer.

The protein operates within mycotoxin biosynthesis. Its function is as follows. Hydrolyase; part of the gene cluster that mediates the biosynthesis of the mycotoxin pyrichalasin H, a tyrosine-derived cytochalasan that inhibits the growth of rice seedlings, but also inhibits lymphocyte capping and actin polymerization and alters cell morphology. Pyrichalasin H is indicated as the responsible agent for the genus-specific pathogenicity of M.grisea toward crabgrass. The first step in the pathway is catalyzed by the O-methyltransferase pyiA which methylates free tyrosine to generate the precursor O-methyltyrosine. The hybrid PKS-NRPS pyiS, assisted by the enoyl reductase pyiC, are responsible for fusion of the O-methyltyrosine precursor and the polyketide backbone. The polyketide synthase module (PKS) of pyiS is responsible for the synthesis of the polyketide backbone and the downstream nonribosomal peptide synthetase (NRPS) amidates the carboxyl end of the polyketide with the O-methyltyrosine precursor. As the NRPS A-domain demonstrates substrate tolerance, pyiS can also use phenylalanine, tyrosine and even para-chlorophenylalanine as amino acid precursor, which leads to the production of novel cytochalasans, including halogenated cytochalasans. Because pyiS lacks a designated enoylreductase (ER) domain, the required activity is provided the enoyl reductase pyiC. Reduction by the hydrolyase pyiE leads to 1,5-dihydropyrrolone, which is substrate for dehydration and intra-molecular Diels-Alder cyclization by the Diels-Alderase pyiF to yield the required isoindolone-fused macrocycle. The tailoring cytochrome P450 monooxygenases piyD and piyG catalyze the hydroxylation at C-18 and C-7, respectivily, whereas the short-chain dehydrogenase/reductase pyiH reduces the carbonyl at C-21 in preparation for the transfer of an acetyl group by the acetyltransferase pyiB. These 3 reactions whose order is not clear yet, lead to the production of O-methylpyrichalasin J, a deacetylated pyrichalasin H. Finally, pyiB to converts O-methylpyrichalasin J into the final product pyrichalasin H via acetylation of C-21. The polypeptide is Hydrolase pyiE (Pyricularia grisea (Crabgrass-specific blast fungus)).